A 258-amino-acid chain; its full sequence is Short-chain dehydrogenase/reductase FrzI (258 aa).

3 residues coordinate NADP(+): I21, N41, and N94. Residues S143 and S144 each act as proton donor in the active site. The NADP(+) site is built by Y157, K161, V191, and T193. Y157 functions as the Proton acceptor in the catalytic mechanism. The active-site Lowers pKa of active site Tyr is K161.

It belongs to the short-chain dehydrogenases/reductases (SDR) family.

It carries out the reaction (1S,3S,6S,7S,8R)-7-hydroxy-6-[(4-methoxyphenyl)methyl]-3-(methylamino)-5-azatricyclo[6.3.1.0(1,5)]dodecan-9-one + NADPH + H(+) = (1S,3S,6S,7S,8S,9S)-6-[(4-methoxyphenyl)methyl]-3-(methylamino)-5-azatricyclo[6.3.1.0(1,5)]dodecane-7,9-diol + NADP(+). It participates in secondary metabolite biosynthesis. In terms of biological role, short-chain dehydrogenase/reductase; part of the gene cluster that mediates the biosynthesis of the alkaloid (-)-FR901483, a potent immunosuppressant that shows efficacy in animal models and a probable inhibitor of purine nucleotide biosynthesis by targeting phosphoribosylpyrophosphate amidotransferase (PPAT). Within the pathway, FrzI catalyzes the formation of dephospho-(-)-FR901483 from the aza-tricyclic intermediate produced by FrzH. The biosynthesis of (-)-FR901483 starts with the condensation of two L-tyrosines to yield (S,S)-dityrosyl-piperazine. This process occurs in 3 steps with the non-canonical nonribosomal peptide synthetase FrzA catalyzing the reduction of L-tyrosine into L-tyrosinal, the spontaneous condensation of 2 L-tyrosinal units, and the subsequent reduction by the NmrA-like family domain-containing oxidoreductase FrzB. The cytochrome P450 monooxygenase FrzC then performs coupling between N10 and C1' to morph the piperazine into a 1,4-diazabicyclo[3.2.1]octane spiro-fused to a 2,5-cyclohexadienone. The dienone portion is further reduced to cyclohexanone by the flavin-dependent reductase FrzD. The methyltranserases (MTs) FrzE and FrzF are then involved in the methylation at the C10' amine and the C4 phenolic oxygen, respectively. The order of the two MTs appear to be interchangeable. Cleavage of the C9-N10' bond by the dioxygenase FrzG then leads to formation of a conjugated iminium. In addition to the oxidation of C9, an additional dehydrogenation between C7 and C8 can occur to give a likely shunt product. The next biosynthetic step is the intramolecular aldol condensation catalyzed by the newly identified aldolase FrzH to yield an aza-tricyclic product with the formation of a C9-C3' bond. The short-chain dehydrogenase/reductase FrzI then produces dephospho-(-)-FR901483 that is phosphorylated at C4'-OH into (-)-FR901483 by the phosphotransferase FrzJ. In Cladobotryum sp, this protein is Short-chain dehydrogenase/reductase FrzI.